A 525-amino-acid polypeptide reads, in one-letter code: GMP synthase [glutamine-hydrolyzing] (525 aa).

A Glutamine amidotransferase type-1 domain is found at 12–206; sequence RILIIDFGSQ…THGICGCGGD (195 aa). Catalysis depends on C90, which acts as the Nucleophile. Active-site residues include H180 and E182. In terms of domain architecture, GMPS ATP-PPase spans 207–399; the sequence is WTMAAFKDQA…LGLPDEMVGR (193 aa). ATP is bound at residue 234-240; it reads SGGVDSS.

Homodimer.

The catalysed reaction is XMP + L-glutamine + ATP + H2O = GMP + L-glutamate + AMP + diphosphate + 2 H(+). Its pathway is purine metabolism; GMP biosynthesis; GMP from XMP (L-Gln route): step 1/1. Catalyzes the synthesis of GMP from XMP. This Rhodospirillum rubrum (strain ATCC 11170 / ATH 1.1.1 / DSM 467 / LMG 4362 / NCIMB 8255 / S1) protein is GMP synthase [glutamine-hydrolyzing].